The chain runs to 228 residues: Translin (228 aa).

The DNA/RNA binding stretch occupies residues 86-90 (RFHEH). Residues 177–198 (LDSGFRLLNLKNDSLRKRYDGL) are leucine-zipper. Lysine 187 carries the post-translational modification N6-acetyllysine. Position 190 is a phosphoserine (serine 190). At lysine 199 the chain carries N6-acetyllysine.

The protein belongs to the translin family. As to quaternary structure, ring-shaped heterooctamer of six TSN and two TSNAX subunits, DNA/RNA binding occurs inside the ring.

It localises to the cytoplasm. It is found in the nucleus. DNA-binding protein that specifically recognizes consensus sequences at the breakpoint junctions in chromosomal translocations, mostly involving immunoglobulin (Ig)/T-cell receptor gene segments. Seems to recognize single-stranded DNA ends generated by staggered breaks occurring at recombination hot spots. In terms of biological role, exhibits both single-stranded and double-stranded endoribonuclease activity. May act as an activator of RNA-induced silencing complex (RISC) by facilitating endonucleolytic cleavage of the siRNA passenger strand. This chain is Translin (TSN), found in Pongo abelii (Sumatran orangutan).